Reading from the N-terminus, the 287-residue chain is Small ribosomal subunit protein uS3 (287 aa).

The region spanning 38–106 is the KH type-2 domain; that stretch reads IRRLLATGLE…QVQLNILEVK (69 aa). The segment at 216–287 is disordered; sequence AAAPAGADRP…AETTTQNPGS (72 aa). Residues 238–287 are compositionally biased toward low complexity; the sequence is SGASGTTATSTDAGRAASGTQEAPAAAEAAAGTEAAAGAAAETTTQNPGS.

Belongs to the universal ribosomal protein uS3 family. As to quaternary structure, part of the 30S ribosomal subunit. Forms a tight complex with proteins S10 and S14.

In terms of biological role, binds the lower part of the 30S subunit head. Binds mRNA in the 70S ribosome, positioning it for translation. The chain is Small ribosomal subunit protein uS3 from Mycobacterium sp. (strain JLS).